A 346-amino-acid chain; its full sequence is Galanin receptor type 1 (346 aa).

At 1-33 (MELAPVNLSEGNGSDPEPPAEPRPLFGIGVENF) the chain is on the extracellular side. N-linked (GlcNAc...) asparagine glycosylation is found at Asn-7 and Asn-12. The chain crosses the membrane as a helical span at residues 34–54 (ITLVVFGLIFAMGVLGNSLVI). Residues 55 to 69 (TVLARSKPGKPRSTT) are Cytoplasmic-facing. A helical membrane pass occupies residues 70–90 (NLFILNLSIADLAYLLFCIPF). At 91 to 108 (QATVYALPTWVLGAFICK) the chain is on the extracellular side. Cys-107 and Cys-185 are oxidised to a cystine. The chain crosses the membrane as a helical span at residues 109–130 (FIHYFFTVSMLVSIFTLAAMSV). Topologically, residues 131-150 (DRYVAIVHSRRSSSLRVSRN) are cytoplasmic. Residues 151–171 (ALLGVGFIWALSIAMASPVAY) form a helical membrane-spanning segment. At 172–196 (YQRLFHRDSNQTFCWEHWPNQLHKK) the chain is on the extracellular side. Residue Asn-181 is glycosylated (N-linked (GlcNAc...) asparagine). The chain crosses the membrane as a helical span at residues 197–217 (AYVVCTFVFGYLLPLLLICFC). Topologically, residues 218–246 (YAKVLNHLHKKLKNMSKKSEASKKKTAQT) are cytoplasmic. The chain crosses the membrane as a helical span at residues 247 to 267 (VLVVVVVFGISWLPHHVIHLW). Residues 268–269 (AE) are Extracellular-facing. A helical membrane pass occupies residues 270 to 290 (FGAFPLTPASFFFRITAHCLA). Topologically, residues 291-346 (YSNSSVNPIIYAFLSENFRKAYKQVFKCRVCNESPHGDAKEKNRIDTPPSTNCTHV) are cytoplasmic. Cys-318 carries the S-palmitoyl cysteine lipid modification. Residues 326 to 335 (HGDAKEKNRI) are compositionally biased toward basic and acidic residues. The interval 326–346 (HGDAKEKNRIDTPPSTNCTHV) is disordered.

It belongs to the G-protein coupled receptor 1 family. Interacts with GRP39 AND HTR1A. Post-translationally, three cysteine residues are found in the C-terminus, at least one of which may be palmitoylated. As to expression, spinal cord, small intestine, Rin14B insulinoma cells and several brain regions, particularly ventral hippocampus, amygdala, supraoptic nucleus, hypothalamus, thalamus, lateral parabrachial nucleus and locus coeruleus.

The protein resides in the cell membrane. In terms of biological role, receptor for the hormone galanin. The activity of this receptor is mediated by G proteins that inhibit adenylate cyclase activity. The sequence is that of Galanin receptor type 1 (Galr1) from Rattus norvegicus (Rat).